A 111-amino-acid chain; its full sequence is Large ribosomal subunit protein eL31 (111 aa).

Belongs to the eukaryotic ribosomal protein eL31 family.

In Tetrahymena thermophila (strain SB210), this protein is Large ribosomal subunit protein eL31 (RPL31).